Reading from the N-terminus, the 308-residue chain is Snake venom metalloprotease inhibitor 02D01 (308 aa).

The signal sequence occupies residues methionine 1–glycine 23. Residues lysine 24–glutamate 38 constitute a propeptide that is removed on maturation. Glutamine 39 carries the pyrrolidone carboxylic acid modification. A propeptide spanning residues leucine 42 to glutamate 50 is cleaved from the precursor. Pyrrolidone carboxylic acid is present on glutamine 51. The propeptide occupies leucine 54–glutamate 62. Glutamine 63 is subject to Pyrrolidone carboxylic acid. A propeptide spanning residues leucine 66–glutamate 74 is cleaved from the precursor. Glutamine 75 is subject to Pyrrolidone carboxylic acid. Residues leucine 78 to glutamate 86 constitute a propeptide that is removed on maturation. The residue at position 87 (glutamine 87) is a Pyrrolidone carboxylic acid. The propeptide occupies leucine 90–glutamate 98. At glutamine 99 the chain carries Pyrrolidone carboxylic acid. Positions leucine 102–glutamate 110 are excised as a propeptide. Pyrrolidone carboxylic acid is present on glutamine 111. Positions leucine 114 to glutamate 122 are excised as a propeptide. Position 123 is a pyrrolidone carboxylic acid (glutamine 123). Positions leucine 126 to glutamate 134 are excised as a propeptide. Glutamine 135 bears the Pyrrolidone carboxylic acid mark. A propeptide spanning residues leucine 138–glutamate 146 is cleaved from the precursor. Pyrrolidone carboxylic acid is present on glutamine 147. The propeptide occupies leucine 150 to glutamate 158. Glutamine 159 bears the Pyrrolidone carboxylic acid mark. A propeptide spanning residues glutamine 162–leucine 249 is cleaved from the precursor. A compositionally biased stretch (polar residues) spans arginine 172 to leucine 182. Disordered stretches follow at residues arginine 172–threonine 228 and histidine 252–arginine 279. Positions valine 198–serine 209 are enriched in gly residues. Residues lysine 210–alanine 227 show a composition bias toward low complexity. Residues serine 265–alanine 277 are compositionally biased toward gly residues. The propeptide occupies arginine 278–lysine 286. A disulfide bond links cysteine 292 and cysteine 308.

This sequence in the C-terminal section; belongs to the natriuretic peptide family. It in the central section; belongs to the pHpG family. Expressed by the venom gland.

It localises to the secreted. Its function is as follows. pEKW and poly-His-poly-Gly peptides may serve as metalloproteinase inhibitors during glandular storage. Their inhibition may be instantly disengaged, by dilution or physiochemical change, when venom is injected into tissue of the prey. In terms of biological role, has a vasorelaxant activity in rat aortic strips and a diuretic potency in anesthetized rats. May act by activating natriuretic receptors (NPR1 and/or NPR2). The chain is Snake venom metalloprotease inhibitor 02D01 from Echis ocellatus (Ocellated saw-scaled viper).